A 432-amino-acid chain; its full sequence is Trigger factor (432 aa).

The 86-residue stretch at 161–246 (EDRVTIDFTG…LKKVEERELP (86 aa)) folds into the PPIase FKBP-type domain.

It belongs to the FKBP-type PPIase family. Tig subfamily.

It localises to the cytoplasm. The enzyme catalyses [protein]-peptidylproline (omega=180) = [protein]-peptidylproline (omega=0). Involved in protein export. Acts as a chaperone by maintaining the newly synthesized protein in an open conformation. Functions as a peptidyl-prolyl cis-trans isomerase. The polypeptide is Trigger factor (Klebsiella pneumoniae subsp. pneumoniae (strain ATCC 700721 / MGH 78578)).